Reading from the N-terminus, the 345-residue chain is Beta-2-glycoprotein 1 (345 aa).

Residues 1 to 19 (MPPPALVLLLGFLCHVAIA) form the signal peptide. 4 Sushi domains span residues 21 to 81 (RTCP…KCMP), 82 to 139 (RVCP…VCAP), 140 to 202 (ITCP…ECRE), and 203 to 262 (VRCP…SCKA). 11 disulfides stabilise this stretch: Cys-23–Cys-66, Cys-51–Cys-79, Cys-84–Cys-124, Cys-110–Cys-137, Cys-142–Cys-188, Cys-174–Cys-200, Cys-205–Cys-248, Cys-234–Cys-260, Cys-264–Cys-315, Cys-300–Cys-325, and Cys-307–Cys-345. O-linked (GalNAc...) threonine glycosylation is present at Thr-33. Asn-92 is a glycosylation site (N-linked (GlcNAc...) asparagine). 3 N-linked (GlcNAc...) asparagine glycosylation sites follow: Asn-162, Asn-183, and Asn-193. The N-linked (GlcNAc...) asparagine glycan is linked to Asn-253. Positions 263–345 (SCKLSIKRAT…KTDASDVKPC (83 aa)) are sushi-like.

As to expression, expressed by the liver and secreted in plasma.

It localises to the secreted. Functionally, binds to various kinds of negatively charged substances such as heparin, phospholipids, and dextran sulfate. May prevent activation of the intrinsic blood coagulation cascade by binding to phospholipids on the surface of damaged cells. In Bos taurus (Bovine), this protein is Beta-2-glycoprotein 1 (APOH).